The primary structure comprises 402 residues: Multidrug resistance protein MdtG (402 aa).

11 helical membrane passes run 14–34 (LYIV…IMPF), 52–72 (LWTG…APFW), 90–110 (LGMA…QLLI), 113–133 (ALLG…ATQV), 149–169 (AVSG…LYGL), 171–191 (PVFF…LFFV), 219–239 (VICL…VTPI), 254–274 (LAFI…ISAP), 288–308 (VLIF…LVSN), 318–338 (LLGA…LYNI), and 376–396 (AVFY…WISF).

This sequence belongs to the major facilitator superfamily. DHA1 family. MdtG (TC 2.A.1.2.20) subfamily.

The protein resides in the cell inner membrane. The polypeptide is Multidrug resistance protein MdtG (Proteus mirabilis (strain HI4320)).